The primary structure comprises 246 residues: Envelope glycoprotein L (246 aa).

Positions 1 to 19 (MKTNIFFIFLISILNQIYA) are cleaved as a signal peptide. Residues 29–235 (LEQECIKNIL…EKYNEVLPFR (207 aa)) form the gL betaherpesvirus-type domain. A disulfide bridge links C134 with C139.

Belongs to the herpesviridae glycoprotein L (gL) family. Betaherpesvirinae gL subfamily. Interacts with glycoprotein H (gH); this interaction is necessary for the correct processing and cell surface expression of gH.

It localises to the virion membrane. The protein localises to the host cell membrane. The protein resides in the host Golgi apparatus. It is found in the host trans-Golgi network. The heterodimer glycoprotein H-glycoprotein L is required for the fusion of viral and plasma membranes leading to virus entry into the host cell. Acts as a functional inhibitor of gH and maintains gH in an inhibited form. Upon binding to host integrins, gL dissociates from gH leading to activation of the viral fusion glycoproteins gB and gH. The protein is Envelope glycoprotein L of Homo sapiens (Human).